A 321-amino-acid polypeptide reads, in one-letter code: Tetraacyldisaccharide 4'-kinase (321 aa).

54 to 61 (SVGGTGKT) is a binding site for ATP.

The protein belongs to the LpxK family.

It carries out the reaction a lipid A disaccharide + ATP = a lipid IVA + ADP + H(+). The protein operates within glycolipid biosynthesis; lipid IV(A) biosynthesis; lipid IV(A) from (3R)-3-hydroxytetradecanoyl-[acyl-carrier-protein] and UDP-N-acetyl-alpha-D-glucosamine: step 6/6. Transfers the gamma-phosphate of ATP to the 4'-position of a tetraacyldisaccharide 1-phosphate intermediate (termed DS-1-P) to form tetraacyldisaccharide 1,4'-bis-phosphate (lipid IVA). The chain is Tetraacyldisaccharide 4'-kinase from Rickettsia africae (strain ESF-5).